The following is a 388-amino-acid chain: Galactokinase (388 aa).

Residue 33 to 36 (EHTD) participates in substrate binding. ATP is bound by residues Ser67 and 124 to 130 (GSGLSSS). Residues Ser130 and Glu162 each coordinate Mg(2+). Catalysis depends on Asp174, which acts as the Proton acceptor. Tyr224 contributes to the substrate binding site.

Belongs to the GHMP kinase family. GalK subfamily.

The protein resides in the cytoplasm. The enzyme catalyses alpha-D-galactose + ATP = alpha-D-galactose 1-phosphate + ADP + H(+). Its pathway is carbohydrate metabolism; galactose metabolism. Functionally, catalyzes the transfer of the gamma-phosphate of ATP to D-galactose to form alpha-D-galactose-1-phosphate (Gal-1-P). This chain is Galactokinase, found in Streptococcus thermophilus (strain ATCC BAA-491 / LMD-9).